Here is a 244-residue protein sequence, read N- to C-terminus: Phosphoribosyl isomerase A (244 aa).

The active-site Proton acceptor is the aspartate 10. Catalysis depends on aspartate 129, which acts as the Proton donor.

The protein belongs to the HisA/HisF family.

It localises to the cytoplasm. It catalyses the reaction 1-(5-phospho-beta-D-ribosyl)-5-[(5-phospho-beta-D-ribosylamino)methylideneamino]imidazole-4-carboxamide = 5-[(5-phospho-1-deoxy-D-ribulos-1-ylimino)methylamino]-1-(5-phospho-beta-D-ribosyl)imidazole-4-carboxamide. It carries out the reaction N-(5-phospho-beta-D-ribosyl)anthranilate = 1-(2-carboxyphenylamino)-1-deoxy-D-ribulose 5-phosphate. It participates in amino-acid biosynthesis; L-histidine biosynthesis; L-histidine from 5-phospho-alpha-D-ribose 1-diphosphate: step 4/9. Its pathway is amino-acid biosynthesis; L-tryptophan biosynthesis; L-tryptophan from chorismate: step 3/5. Its function is as follows. Involved in both the histidine and tryptophan biosynthetic pathways. The chain is Phosphoribosyl isomerase A from Mycobacterium ulcerans (strain Agy99).